The following is a 178-amino-acid chain: Inner membrane-spanning protein YciB (178 aa).

The next 5 helical transmembrane spans lie at 12–32 (LFFAAYSLTGNIYLATGVAIV), 50–70 (PMQWVSLALILVLGGLTLVLH), 74–94 (FIMWKPTVLYWLLGAGFLISD), 120–140 (LTFAWSGFFAFMGALNLFVAF), and 145–165 (AVWVNFKLFGGMGLMLVFVLA).

It belongs to the YciB family.

It localises to the cell inner membrane. Functionally, plays a role in cell envelope biogenesis, maintenance of cell envelope integrity and membrane homeostasis. This is Inner membrane-spanning protein YciB from Laribacter hongkongensis (strain HLHK9).